A 152-amino-acid chain; its full sequence is SMN complex subunit smn1 (152 aa).

The interacts with yip11/gem2 stretch occupies residues 26–51 (KKYHSIEAKGGVSDPDSRLDGEKLIS). Residues 88-110 (DNKGLSDEKPETRAAETHQEFME) are disordered. Positions 91-108 (GLSDEKPETRAAETHQEF) are enriched in basic and acidic residues. The may interact with gem8 stretch occupies residues 130–152 (SWYYAGYYTGLAEGLAKSEQRKD).

The protein belongs to the SMN family. As to quaternary structure, homooligomer; may form homodimers and homotetramers. Part of the core SMN complex at least composed of smn1, yip11/gem2, gem6, gem7 and gem8. Part of the SMN-Sm complex. Interacts with yip11/gem2; the interaction is direct. Interacts with gem8; the interaction is direct. Interacts with proteins of the Sm complex, including smn1, smb1, smd1, smd2 and smd3.

It localises to the nucleus. In terms of biological role, the SMN complex catalyzes the assembly of small nuclear ribonucleoproteins (snRNPs), the building blocks of the spliceosome, and thereby plays an important role in the splicing of cellular pre-mRNAs. Most spliceosomal snRNPs contain a common set of Sm proteins smb1, smd1, smd2, smd3, sme1, smf1 and smg1 that assemble in a heptameric protein ring on the Sm site of the small nuclear RNA to form the core snRNP (Sm core). In the cytosol, the Sm proteins smd1, smd2, sme1, smf1 and smg1 (5Sm) are trapped in an inactive 6S pICln-Sm complex by the chaperone saf5 that controls the assembly of the core snRNP. To assemble core snRNPs, the SMN complex accepts the trapped 5Sm proteins from saf5 forming an intermediate. Binding of snRNA inside 5Sm triggers eviction of the SMN complex, thereby allowing binding of smd3 and smb1 to complete assembly of the core snRNP. Within the SMN complex, smn1 acts as a structural backbone and together with yip11/gem2 it gathers the Sm complex subunits. The chain is SMN complex subunit smn1 from Schizosaccharomyces pombe (strain 972 / ATCC 24843) (Fission yeast).